A 1166-amino-acid chain; its full sequence is Pesticidal crystal protein Cry1Ga (1166 aa).

This sequence belongs to the delta endotoxin family.

In terms of biological role, promotes colloidosmotic lysis by binding to the midgut epithelial cells of insects. The sequence is that of Pesticidal crystal protein Cry1Ga (cry1Ga) from Bacillus thuringiensis.